A 544-amino-acid polypeptide reads, in one-letter code: Membrane protein insertase YidC (544 aa).

A run of 5 helical transmembrane segments spans residues 6–26 (NILL…WQTD), 345–365 (LLMF…LITL), 423–443 (GGCL…WVLL), 460–480 (LSVQ…MFVM), and 503–523 (VVFT…WLVG).

Belongs to the OXA1/ALB3/YidC family. Type 1 subfamily. As to quaternary structure, interacts with the Sec translocase complex via SecD. Specifically interacts with transmembrane segments of nascent integral membrane proteins during membrane integration.

It localises to the cell inner membrane. In terms of biological role, required for the insertion and/or proper folding and/or complex formation of integral membrane proteins into the membrane. Involved in integration of membrane proteins that insert both dependently and independently of the Sec translocase complex, as well as at least some lipoproteins. Aids folding of multispanning membrane proteins. In Shewanella woodyi (strain ATCC 51908 / MS32), this protein is Membrane protein insertase YidC.